We begin with the raw amino-acid sequence, 132 residues long: Histone H2B.1 (132 aa).

Residues 1–13 (MSAKASKAPASKA) are compositionally biased toward low complexity. Positions 1–39 (MSAKASKAPASKAPAEKKPAAKKTSSSTDPSKKRTKARK) are disordered. N6-acetyllysine; alternate is present on lysine 7. A Glycyl lysine isopeptide (Lys-Gly) (interchain with G-Cter in SUMO); alternate cross-link involves residue lysine 7. Serine 11 is subject to Phosphoserine. An N6-acetyllysine modification is found at lysine 12. Lysine 17 carries the N6-acetyllysine; alternate modification. A Glycyl lysine isopeptide (Lys-Gly) (interchain with G-Cter in SUMO); alternate cross-link involves residue lysine 17. Residue lysine 18 forms a Glycyl lysine isopeptide (Lys-Gly) (interchain with G-Cter in SUMO) linkage. Lysine 125 is covalently cross-linked (Glycyl lysine isopeptide (Lys-Gly) (interchain with G-Cter in ubiquitin)).

It belongs to the histone H2B family. As to quaternary structure, the nucleosome is a histone octamer containing two molecules each of H2A, H2B, H3 and H4 assembled in one H3-H4 heterotetramer and two H2A-H2B heterodimers. The octamer wraps approximately 147 bp of DNA. Monoubiquitinated by the UBC2-BRE1 complex to form H2BK123ub1. H2BK123ub1 gives a specific tag for epigenetic transcriptional activation and is also prerequisite for H3K4me and H3K79me formation. H2BK123ub1 also modulates the formation of double-strand breaks during meiosis and is a prerequisite for DNA-damage checkpoint activation. Post-translationally, phosphorylated by STE20 to form H2BS10ph during progression through meiotic prophase. May be correlated with chromosome condensation. In terms of processing, acetylated by GCN5 to form H2BK11ac and H2BK16ac. H2BK16ac can also be formed by ESA1. Acetylation of N-terminal lysines and particularly formation of H2BK11acK16ac has a positive effect on transcription. Sumoylation to form H2BK6su and probably also H2BK16su or H2BK17su, occurs preferentially near the telomeres and represses gene transcription.

It is found in the nucleus. It localises to the chromosome. Its function is as follows. Core component of nucleosome. Nucleosomes wrap and compact DNA into chromatin, limiting DNA accessibility to the cellular machineries which require DNA as a template. Histones thereby play a central role in transcription regulation, DNA repair, DNA replication and chromosomal stability. DNA accessibility is regulated via a complex set of post-translational modifications of histones, also called histone code, and nucleosome remodeling. The polypeptide is Histone H2B.1 (HTB1) (Kluyveromyces lactis (strain ATCC 8585 / CBS 2359 / DSM 70799 / NBRC 1267 / NRRL Y-1140 / WM37) (Yeast)).